Here is a 196-residue protein sequence, read N- to C-terminus: Putative AAA family ATPase L572 (196 aa).

ATP is bound at residue 32–39 (NAVNCKET).

This sequence belongs to the AAA ATPase family.

This is Putative AAA family ATPase L572 from Acanthamoeba polyphaga mimivirus (APMV).